Consider the following 80-residue polypeptide: MKGIILFISCLMLIDVVVESRDAYPADWRGCKFSCFWGSSSWCNEECTSLGGSSGYCAWPACWCYGLPDSVRYYNNKCHK.

The first 20 residues, 1–20, serve as a signal peptide directing secretion; sequence MKGIILFISCLMLIDVVVES. Residues 21–79 form the LCN-type CS-alpha/beta domain; sequence RDAYPADWRGCKFSCFWGSSSWCNEECTSLGGSSGYCAWPACWCYGLPDSVRYYNNKCH. Disulfide bonds link Cys-31–Cys-78, Cys-35–Cys-57, Cys-43–Cys-62, and Cys-47–Cys-64.

Belongs to the long (4 C-C) scorpion toxin superfamily. Sodium channel inhibitor family. Beta subfamily. Expressed by the venom gland.

The protein localises to the secreted. Inhibits the sodium (Nav) currents in an apparent irreversible manner. Produces small depolarization and induces repetitive firing in squid axons. Is specific for arthropods (crickets, triatomides, crabs and squids), but is non-toxic to mice. This chain is Toxin TdNa1, found in Tityus discrepans (Venezuelan scorpion).